Here is a 210-residue protein sequence, read N- to C-terminus: Insulin receptor (210 aa).

Positions 1 to 96 (VSNSSSQIIL…SQILKELEES (96 aa)) constitute a Fibronectin type-III domain. Residues Asn3, Asn21, and Asn68 are each glycosylated (N-linked (GlcNAc...) asparagine). Positions 55 to 78 (WSPPFESEDSQKHNQSEYEDSAGE) are disordered. Residues 103–111 (EDYLHNVVF) are insulin-binding. A disordered region spans residues 116 to 169 (TSSGTGAEDPRPSRKRRSLGDVGNVTVAVPTVAAFPNTSSTSTPTSPEEHRPFE). Over 133 to 210 (SLGDVGNVTV…EERCSVAAYV (78 aa)) the chain is Extracellular. The span at 137 to 161 (VGNVTVAVPTVAAFPNTSSTSTPTS) shows a compositional bias: low complexity. 2 N-linked (GlcNAc...) asparagine glycosylation sites follow: Asn139 and Asn152. Cys195 and Cys204 are oxidised to a cystine.

This sequence belongs to the protein kinase superfamily. Tyr protein kinase family. Insulin receptor subfamily. In terms of assembly, tetramer of 2 alpha and 2 beta chains linked by disulfide bonds. The alpha chains carry the insulin-binding regions, while the beta chains carry the kinase domain. Forms a hybrid receptor with IGF1R, the hybrid is a tetramer consisting of 1 alpha chain and 1 beta chain of INSR and 1 alpha chain and 1 beta chain of IGF1R. Interacts with SORBS1 but dissociates from it following insulin stimulation. Binds SH2B2. Activated form of INSR interacts (via phosphorylated Tyrosine) with the PTB/PID domains of IRS1 and SHC1. The sequences surrounding the phosphorylated NPXY motif contribute differentially to either IRS1 or SHC1 recognition. Interacts (via tyrosines in the C-terminus) with IRS2 (via PTB domain and 591-786 AA); the 591-786 would be the primary anchor of IRS2 to INSR while the PTB domain would have a stabilizing action on the interaction with INSR. Interacts with the SH2 domains of the 85 kDa regulatory subunit of PI3K (PIK3R1) in vitro, when autophosphorylated on tyrosine residues. Interacts with SOCS7. Interacts with SOCS3. Interacts with SOCS1. Interacts with CAV2 (tyrosine-phosphorylated form); the interaction is increased with 'Tyr-27'phosphorylation of CAV2. Interacts with ARRB2. Interacts with GRB10; this interaction blocks the association between IRS1/IRS2 and INSR, significantly reduces insulin-stimulated tyrosine phosphorylation of IRS1 and IRS2 and thus decreases insulin signaling. Interacts with GRB7. Interacts with PDPK1. Interacts with GRB14 (via BPS domain). Interacts (via subunit alpha) with ENPP1 (via 485-599 AA); this interaction blocks autophosphorylation. Interacts with PTPRE. Interacts with STAT5B (via SH2 domain). Interacts with PTPRF. Interacts with ATIC; ATIC together with PRKAA2/AMPK2 and HACD3/PTPLAD1 is proposed to be part of a signaling netwok regulating INSR autophosphorylation and endocytosis. Interacts with the insulin receptor SORL1; this interaction strongly increases its surface exposure, hence strengthens insulin signal reception. Interacts (tyrosine phosphorylated) with CCDC88A/GIV (via SH2-like region); binding requires autophosphorylation of the INSR C-terminal region. Interacts with GNAI3; the interaction is probably mediated by CCDC88A/GIV. Interacts with LMBRD1. Interacts (in response to insulin stimulation) with NCK1; this interaction may recruit PTPN1 to mediate INSR dephosphorylation. After being transported from the endoplasmic reticulum to the Golgi apparatus, the single glycosylated precursor is further glycosylated and then cleaved, followed by its transport to the plasma membrane. In terms of processing, autophosphorylated on tyrosine residues in response to insulin. Dephosphorylated by PTPN1, PTPRE and PTPRF. Dephosphorylated by PTPN2; down-regulates insulin-induced signaling. Post-translationally, S-nitrosylation by BLVRB inhibits the receptor tyrosine kinase, thereby inhibiting insulin signaling.

It is found in the cell membrane. The protein localises to the late endosome. The protein resides in the lysosome. The enzyme catalyses L-tyrosyl-[protein] + ATP = O-phospho-L-tyrosyl-[protein] + ADP + H(+). Its activity is regulated as follows. Activated in response to insulin. Autophosphorylation activates the kinase activity. PTPN1, PTPRE and PTPRF dephosphorylate important tyrosine residues, thereby reducing INSR activity. Inhibited by ENPP1. GRB10 and GRB14 inhibit the catalytic activity of the INSR, they block access of substrates to the activated receptor. SOCS1 and SOCS3 act as negative regulators of INSR activity, they bind to the activated INRS and interfere with the phosphorylation of INSR substrates. Receptor tyrosine kinase which mediates the pleiotropic actions of insulin. Binding of insulin leads to phosphorylation of several intracellular substrates, including, insulin receptor substrates (IRS1, 2, 3, 4), SHC, GAB1, CBL and other signaling intermediates. Each of these phosphorylated proteins serve as docking proteins for other signaling proteins that contain Src-homology-2 domains (SH2 domain) that specifically recognize different phosphotyrosine residues, including the p85 regulatory subunit of PI3K and SHP2. Phosphorylation of IRSs proteins lead to the activation of two main signaling pathways: the PI3K-AKT/PKB pathway, which is responsible for most of the metabolic actions of insulin, and the Ras-MAPK pathway, which regulates expression of some genes and cooperates with the PI3K pathway to control cell growth and differentiation. Binding of the SH2 domains of PI3K to phosphotyrosines on IRS1 leads to the activation of PI3K and the generation of phosphatidylinositol-(3, 4, 5)-triphosphate (PIP3), a lipid second messenger, which activates several PIP3-dependent serine/threonine kinases, such as PDPK1 and subsequently AKT/PKB. The net effect of this pathway is to produce a translocation of the glucose transporter SLC2A4/GLUT4 from cytoplasmic vesicles to the cell membrane to facilitate glucose transport. Moreover, upon insulin stimulation, activated AKT/PKB is responsible for: anti-apoptotic effect of insulin by inducing phosphorylation of BAD; regulates the expression of gluconeogenic and lipogenic enzymes by controlling the activity of the winged helix or forkhead (FOX) class of transcription factors. Another pathway regulated by PI3K-AKT/PKB activation is mTORC1 signaling pathway which regulates cell growth and metabolism and integrates signals from insulin. AKT mediates insulin-stimulated protein synthesis by phosphorylating TSC2 thereby activating mTORC1 pathway. The Ras/RAF/MAP2K/MAPK pathway is mainly involved in mediating cell growth, survival and cellular differentiation of insulin. Phosphorylated IRS1 recruits GRB2/SOS complex, which triggers the activation of the Ras/RAF/MAP2K/MAPK pathway. In addition to binding insulin, the insulin receptor can bind insulin-like growth factors (IGFI and IGFII). When present in a hybrid receptor with IGF1R, binds IGF1. In adipocytes, inhibits lipolysis. The sequence is that of Insulin receptor (INSR) from Macaca mulatta (Rhesus macaque).